The sequence spans 420 residues: Gamma-glutamyl phosphate reductase (420 aa).

This sequence belongs to the gamma-glutamyl phosphate reductase family.

It localises to the cytoplasm. The enzyme catalyses L-glutamate 5-semialdehyde + phosphate + NADP(+) = L-glutamyl 5-phosphate + NADPH + H(+). It functions in the pathway amino-acid biosynthesis; L-proline biosynthesis; L-glutamate 5-semialdehyde from L-glutamate: step 2/2. Its function is as follows. Catalyzes the NADPH-dependent reduction of L-glutamate 5-phosphate into L-glutamate 5-semialdehyde and phosphate. The product spontaneously undergoes cyclization to form 1-pyrroline-5-carboxylate. This is Gamma-glutamyl phosphate reductase from Chlorobaculum parvum (strain DSM 263 / NCIMB 8327) (Chlorobium vibrioforme subsp. thiosulfatophilum).